The sequence spans 62 residues: Metallothionein-like protein 3A (62 aa).

This sequence belongs to the metallothionein superfamily. Type 15 family.

Its function is as follows. Metallothioneins have a high content of cysteine residues that bind various heavy metals. The protein is Metallothionein-like protein 3A (MT3A) of Oryza sativa subsp. indica (Rice).